We begin with the raw amino-acid sequence, 68 residues long: TxMMSK-03 (68 aa).

Positions 1 to 19 (MSKLGALLIICLLLFPLTA) are cleaved as a signal peptide. Positions 20–50 (VPMDGDQPADRPAERMQDDISFEQHPMFDAT) are excised as a propeptide. 3 cysteine pairs are disulfide-bonded: C53–C67, C54–C63, and C59–C66. The residue at position 65 (P65) is a 4-hydroxyproline; partial.

Contains 3 disulfide bonds. In terms of tissue distribution, expressed by the venom duct. Both hydroxylated and non-hydroxylated forms are mostly and only present in part 2 (proximal of the venom bulb) of the venom duct, respectively.

It localises to the secreted. The protein is TxMMSK-03 of Conus textile (Cloth-of-gold cone).